Consider the following 112-residue polypeptide: MNSAGYEVFEVLSGQSFRCAEGQSVLRAMEAQGKRCIPVGCRGGGCGLCRVRVLSGAYRSGRMSRGHVPAKAAAEALALACQVFPQTDLTIEYFRHVGGNKPDNMNYEEVTS.

The 92-residue stretch at 6–97 (YEVFEVLSGQ…DLTIEYFRHV (92 aa)) folds into the 2Fe-2S ferredoxin-type domain. The [2Fe-2S] cluster site is built by cysteine 41, cysteine 46, cysteine 49, and cysteine 81.

It belongs to the 2Fe2S plant-type ferredoxin family.

It functions in the pathway aromatic compound metabolism; catechol degradation. Functionally, ferredoxins are iron-sulfur proteins that transfer electrons in a wide variety of metabolic reactions. This Pseudomonas putida (Arthrobacter siderocapsulatus) protein is Ferredoxin, plant-type (xylT).